Here is an 85-residue protein sequence, read N- to C-terminus: UPF0297 protein CPR_1749 (85 aa).

Belongs to the UPF0297 family.

The protein is UPF0297 protein CPR_1749 of Clostridium perfringens (strain SM101 / Type A).